We begin with the raw amino-acid sequence, 288 residues long: Polyamine aminopropyltransferase (288 aa).

The 230-residue stretch at E9–D238 folds into the PABS domain. S-methyl-5'-thioadenosine is bound at residue Q33. Residues H64 and D88 each coordinate spermidine. Residues E108 and D140 to G141 each bind S-methyl-5'-thioadenosine. D158 serves as the catalytic Proton acceptor. D158–D161 lines the spermidine pocket. Residue P165 coordinates S-methyl-5'-thioadenosine.

The protein belongs to the spermidine/spermine synthase family. Homodimer or homotetramer.

Its subcellular location is the cytoplasm. The enzyme catalyses S-adenosyl 3-(methylsulfanyl)propylamine + putrescine = S-methyl-5'-thioadenosine + spermidine + H(+). It functions in the pathway amine and polyamine biosynthesis; spermidine biosynthesis; spermidine from putrescine: step 1/1. Functionally, catalyzes the irreversible transfer of a propylamine group from the amino donor S-adenosylmethioninamine (decarboxy-AdoMet) to putrescine (1,4-diaminobutane) to yield spermidine. The sequence is that of Polyamine aminopropyltransferase from Shigella dysenteriae serotype 1 (strain Sd197).